Here is a 358-residue protein sequence, read N- to C-terminus: 3-ketosteroid-9-alpha-monooxygenase, ferredoxin reductase component (358 aa).

In terms of domain architecture, FAD-binding FR-type spans 12 to 124 (DHVLELQIAE…LAPSGNFVPT (113 aa)). Positions 269–358 (ATAVVELDGQ…SDSVEVTYDE (90 aa)) constitute a 2Fe-2S ferredoxin-type domain. C305, C310, C313, and C343 together coordinate [2Fe-2S] cluster.

As to quaternary structure, monomer. The two-component system 3-ketosteroid-9-alpha-monooxygenase is composed of an oxygenase component KshA and a reductase component KshB. The cofactor is FAD. Requires [2Fe-2S] cluster as cofactor.

The catalysed reaction is androsta-1,4-diene-3,17-dione + 2 reduced [2Fe-2S]-[ferredoxin] + O2 + 2 H(+) = 9alpha-hydroxyandrosta-1,4-diene-3,17-dione + 2 oxidized [2Fe-2S]-[ferredoxin] + H2O. It functions in the pathway lipid metabolism; steroid biosynthesis. In terms of biological role, involved in the degradation of cholesterol. Catalyzes the introduction of a 9a-hydroxyl moiety into 1,4-androstadiene-3,17-dione (ADD) to yield the 9alpha-hydroxy-1,4-androstadiene-3,17-dione (9OHADD) intermediate which spontaneously form 3-hydroxy-9,10-seconandrost-1,3,5(10)-triene-9,17-dione (HSA) via the meta-cleavage of ring B with concomitant aromatization of ring A. The sequence is that of 3-ketosteroid-9-alpha-monooxygenase, ferredoxin reductase component (hmp) from Mycobacterium tuberculosis (strain CDC 1551 / Oshkosh).